A 109-amino-acid chain; its full sequence is Putative double-stranded DNA mimic protein YciU (109 aa).

Belongs to the putative dsDNA mimic protein family.

In terms of biological role, may act as a double-stranded DNA (dsDNA) mimic. Probably regulates the activity of a dsDNA-binding protein. The sequence is that of Putative double-stranded DNA mimic protein YciU from Salmonella paratyphi B (strain ATCC BAA-1250 / SPB7).